Reading from the N-terminus, the 248-residue chain is DNA polymerase sliding clamp (248 aa).

It belongs to the PCNA family. As to quaternary structure, homotrimer. The subunits circularize to form a toroid; DNA passes through its center. Replication factor C (RFC) is required to load the toroid on the DNA.

Its function is as follows. Sliding clamp subunit that acts as a moving platform for DNA processing. Responsible for tethering the catalytic subunit of DNA polymerase and other proteins to DNA during high-speed replication. The protein is DNA polymerase sliding clamp of Cenarchaeum symbiosum (strain A).